A 600-amino-acid polypeptide reads, in one-letter code: Integrator complex subunit 11 (600 aa).

Residues H68, H70, D72, H73, H157, and D178 each coordinate Zn(2+). The short motif at 68-73 is the HXHXDH motif element; that stretch reads HFHLDH. The active site involves E203. Residue H414 coordinates Zn(2+). The Nuclear localization signal motif lies at 469-479; sequence LLPDAKKPKLM.

It belongs to the metallo-beta-lactamase superfamily. RNA-metabolizing metallo-beta-lactamase-like family. INTS11 subfamily. As to quaternary structure, component of the Integrator complex, composed of core subunits INTS1, INTS2, INTS3, INTS4, INTS5, INTS6, INTS7, INTS8, INTS9/RC74, INTS10, INTS11/CPSF3L, INTS12, INTS13, INTS14 and INTS15. The core complex associates with protein phosphatase 2A subunits PPP2CA and PPP2R1A, to form the Integrator-PP2A (INTAC) complex. INTS11 is part of the RNA endonuclease subcomplex, composed of INTS4, INTS9, INTS11 and inositol hexakisphosphate (InsP6). Zn(2+) is required as a cofactor.

Its subcellular location is the nucleus. It is found in the cytoplasm. Functionally, RNA endonuclease component of the integrator complex, a multiprotein complex that terminates RNA polymerase II (Pol II) transcription in the promoter-proximal region of genes. The integrator complex provides a quality checkpoint during transcription elongation by driving premature transcription termination of transcripts that are unfavorably configured for transcriptional elongation: the complex terminates transcription by (1) catalyzing dephosphorylation of the C-terminal domain (CTD) of Pol II subunit POLR2A/RPB1 and SUPT5H/SPT5, (2) degrading the exiting nascent RNA transcript via endonuclease activity and (3) promoting the release of Pol II from bound DNA. The integrator complex is also involved in terminating the synthesis of non-coding Pol II transcripts, such as enhancer RNAs (eRNAs), small nuclear RNAs (snRNAs), telomerase RNAs and long non-coding RNAs (lncRNAs). Within the integrator complex, INTS11 constitutes the RNA endonuclease subunit that degrades exiting nascent RNA transcripts. The polypeptide is Integrator complex subunit 11 (INTS11) (Gallus gallus (Chicken)).